The primary structure comprises 92 residues: Small ribosomal subunit protein uS19c (92 aa).

This sequence belongs to the universal ribosomal protein uS19 family.

The protein localises to the plastid. Its function is as follows. Protein S19 forms a complex with S13 that binds strongly to the 16S ribosomal RNA. The chain is Small ribosomal subunit protein uS19c from Cuscuta exaltata (Tall dodder).